The chain runs to 567 residues: Restriction of telomere capping protein 5 (567 aa).

One can recognise a TLDc domain in the interval 289–515; that stretch reads KVMTPALLAQ…IQDVEVWGCG (227 aa).

Belongs to the RTC5 family.

The protein resides in the cytoplasm. May be involved in a process influencing telomere capping. In Saccharomyces cerevisiae (strain RM11-1a) (Baker's yeast), this protein is Restriction of telomere capping protein 5 (RTC5).